Consider the following 361-residue polypeptide: Hsc70-interacting protein (361 aa).

Residues 39-98 form a disordered region; that stretch reads GGTIPPAPASTSTDETSKGKAEEQPEEPVKSPEPESEESDLEIDNEGVIEPDNDDPQEMG. Basic and acidic residues predominate over residues 53 to 71; the sequence is ETSKGKAEEQPEEPVKSPE. The segment covering 72–98 has biased composition (acidic residues); that stretch reads PESEESDLEIDNEGVIEPDNDDPQEMG. 3 TPR repeats span residues 112–145, 147–179, and 181–213; these read ANEK…NPCL, ILYA…NPDS, and QTYK…DYDE. The span at 254 to 270 shows a compositional bias: basic and acidic residues; that stretch reads KAREEHERAQREEEARR. The interval 254 to 292 is disordered; it reads KAREEHERAQREEEARRQAGGAQFGGFPGGFPGGFPGAM. Residues 275-292 show a composition bias toward gly residues; that stretch reads AQFGGFPGGFPGGFPGAM. The region spanning 311–350 is the STI1 domain; the sequence is DPEVLAAMQDPEVMAAFQDVAQNPANMSKYQNNPKVMSLI.

This sequence belongs to the FAM10 family. In terms of assembly, homotetramer. Interacts with HSC70 as well as DNAJ homologs and HSP90.

It localises to the cytoplasm. Its function is as follows. One HIP oligomer binds the ATPase domains of at least two HSC70 molecules dependent on activation of the HSC70 ATPase by HSP40. Stabilizes the ADP state of HSC70 that has a high affinity for substrate protein. Through its own chaperone activity, it may contribute to the interaction of HSC70 with various target proteins. This Gallus gallus (Chicken) protein is Hsc70-interacting protein (ST13).